The primary structure comprises 173 residues: Large ribosomal subunit protein uL16 (173 aa).

Belongs to the universal ribosomal protein uL16 family.

This Methanococcus aeolicus (strain ATCC BAA-1280 / DSM 17508 / OCM 812 / Nankai-3) protein is Large ribosomal subunit protein uL16.